Reading from the N-terminus, the 159-residue chain is 2-C-methyl-D-erythritol 2,4-cyclodiphosphate synthase (159 aa).

The a divalent metal cation site is built by Asp-8 and His-10. 4-CDP-2-C-methyl-D-erythritol 2-phosphate-binding positions include 8 to 10 (DVH) and 34 to 35 (HS). His-42 provides a ligand contact to a divalent metal cation. 4-CDP-2-C-methyl-D-erythritol 2-phosphate contacts are provided by residues 56 to 58 (DIG), 61 to 65 (FPDTD), 100 to 106 (AQAPKML), 132 to 135 (TTTE), Phe-139, and Arg-142.

The protein belongs to the IspF family. As to quaternary structure, homotrimer. The cofactor is a divalent metal cation.

It carries out the reaction 4-CDP-2-C-methyl-D-erythritol 2-phosphate = 2-C-methyl-D-erythritol 2,4-cyclic diphosphate + CMP. Its pathway is isoprenoid biosynthesis; isopentenyl diphosphate biosynthesis via DXP pathway; isopentenyl diphosphate from 1-deoxy-D-xylulose 5-phosphate: step 4/6. In terms of biological role, involved in the biosynthesis of isopentenyl diphosphate (IPP) and dimethylallyl diphosphate (DMAPP), two major building blocks of isoprenoid compounds. Catalyzes the conversion of 4-diphosphocytidyl-2-C-methyl-D-erythritol 2-phosphate (CDP-ME2P) to 2-C-methyl-D-erythritol 2,4-cyclodiphosphate (ME-CPP) with a corresponding release of cytidine 5-monophosphate (CMP). The polypeptide is 2-C-methyl-D-erythritol 2,4-cyclodiphosphate synthase (Salmonella typhi).